A 174-amino-acid polypeptide reads, in one-letter code: Peptide methionine sulfoxide reductase MsrA (174 aa).

Residue Cys-10 is part of the active site.

This sequence belongs to the MsrA Met sulfoxide reductase family.

It carries out the reaction L-methionyl-[protein] + [thioredoxin]-disulfide + H2O = L-methionyl-(S)-S-oxide-[protein] + [thioredoxin]-dithiol. The enzyme catalyses [thioredoxin]-disulfide + L-methionine + H2O = L-methionine (S)-S-oxide + [thioredoxin]-dithiol. Has an important function as a repair enzyme for proteins that have been inactivated by oxidation. Catalyzes the reversible oxidation-reduction of methionine sulfoxide in proteins to methionine. In Arthrobacter sp. (strain FB24), this protein is Peptide methionine sulfoxide reductase MsrA.